We begin with the raw amino-acid sequence, 311 residues long: Probable manganese-dependent inorganic pyrophosphatase (311 aa).

Histidine 9, aspartate 13, aspartate 15, aspartate 75, histidine 97, and aspartate 149 together coordinate Mn(2+).

It belongs to the PPase class C family. Mn(2+) is required as a cofactor.

It localises to the cytoplasm. It catalyses the reaction diphosphate + H2O = 2 phosphate + H(+). The protein is Probable manganese-dependent inorganic pyrophosphatase of Lactobacillus gasseri (strain ATCC 33323 / DSM 20243 / BCRC 14619 / CIP 102991 / JCM 1131 / KCTC 3163 / NCIMB 11718 / NCTC 13722 / AM63).